Here is a 147-residue protein sequence, read N- to C-terminus: 3-dehydroquinate dehydratase (147 aa).

The active-site Proton acceptor is the Tyr-23. Residues Asn-75, His-81, and Asp-88 each contribute to the substrate site. The Proton donor role is filled by His-101. Substrate is bound by residues 102–103 (LS) and Arg-112.

This sequence belongs to the type-II 3-dehydroquinase family. As to quaternary structure, homododecamer.

It catalyses the reaction 3-dehydroquinate = 3-dehydroshikimate + H2O. The protein operates within metabolic intermediate biosynthesis; chorismate biosynthesis; chorismate from D-erythrose 4-phosphate and phosphoenolpyruvate: step 3/7. Its function is as follows. Catalyzes a trans-dehydration via an enolate intermediate. The chain is 3-dehydroquinate dehydratase from Nitrosococcus oceani (strain ATCC 19707 / BCRC 17464 / JCM 30415 / NCIMB 11848 / C-107).